We begin with the raw amino-acid sequence, 327 residues long: Nuclear apoptosis-inducing factor 1 (327 aa).

A required for nuclear localization and apoptosis-inducing activity region spans residues 1-70 (MAVPAKKRKM…CRRELPEVKK (70 aa)). Over residues 87–98 (RAAVEGGEAPGP) the composition is skewed to low complexity. 2 disordered regions span residues 87 to 118 (RAAVEGGEAPGPTEEDGAGGPGTGGGSGGGGP) and 303 to 327 (NTANPAPASDPGQVAQNGQPDSIIQ). Residues 104 to 118 (AGGPGTGGGSGGGGP) are compositionally biased toward gly residues. Positions 316 to 327 (VAQNGQPDSIIQ) are enriched in polar residues.

This sequence belongs to the NAIF1 family. Interacts with HARBI1. Widely expressed.

The protein localises to the nucleus. Its function is as follows. Induces apoptosis. The polypeptide is Nuclear apoptosis-inducing factor 1 (NAIF1) (Homo sapiens (Human)).